A 139-amino-acid chain; its full sequence is Putative pre-16S rRNA nuclease (139 aa).

Belongs to the YqgF nuclease family.

It localises to the cytoplasm. Its function is as follows. Could be a nuclease involved in processing of the 5'-end of pre-16S rRNA. The polypeptide is Putative pre-16S rRNA nuclease (Proteus mirabilis (strain HI4320)).